Consider the following 226-residue polypeptide: Orotidine 5'-phosphate decarboxylase (226 aa).

Residues Asp8, Lys30, Asp58–Thr67, Thr117, Arg177, Gln186, Gly206, and Arg207 contribute to the substrate site. The active-site Proton donor is Lys60.

It belongs to the OMP decarboxylase family. Type 1 subfamily. As to quaternary structure, homodimer.

The enzyme catalyses orotidine 5'-phosphate + H(+) = UMP + CO2. It participates in pyrimidine metabolism; UMP biosynthesis via de novo pathway; UMP from orotate: step 2/2. Catalyzes the decarboxylation of orotidine 5'-monophosphate (OMP) to uridine 5'-monophosphate (UMP). The chain is Orotidine 5'-phosphate decarboxylase from Campylobacter concisus (strain 13826).